The primary structure comprises 226 residues: Apoptosis regulator OPG045 (226 aa).

This sequence belongs to the orthopoxvirus OPG045 family. Homodimer. Interacts with host pro-apoptotic protein BCL2L11 (via BH3 domain). Interacts with host NLRP1. Interacts with host BAK.

The protein localises to the host mitochondrion outer membrane. It localises to the host cytoplasm. In terms of biological role, plays a role in evading host innate immune response by inhibiting host inflammasome activation. Interacts with and inhibits NLR-mediated interleukin-1 beta/IL1B production in infected cells. At the host mitochondria outer membrane, interacts with the BH3 domain of host BAK and prevents BAK from binding active BAX. In turn, host apoptosis is inhibited. The sequence is that of Apoptosis regulator OPG045 (OPG045) from Vaccinia virus (strain Copenhagen) (VACV).